Here is a 504-residue protein sequence, read N- to C-terminus: ATP synthase subunit alpha, chloroplastic (504 aa).

170-177 is a binding site for ATP; the sequence is GDRQTGKT.

The protein belongs to the ATPase alpha/beta chains family. In terms of assembly, F-type ATPases have 2 components, CF(1) - the catalytic core - and CF(0) - the membrane proton channel. CF(1) has five subunits: alpha(3), beta(3), gamma(1), delta(1), epsilon(1). CF(0) has four main subunits: a, b, b' and c.

The protein localises to the plastid. Its subcellular location is the chloroplast thylakoid membrane. It catalyses the reaction ATP + H2O + 4 H(+)(in) = ADP + phosphate + 5 H(+)(out). Produces ATP from ADP in the presence of a proton gradient across the membrane. The alpha chain is a regulatory subunit. The protein is ATP synthase subunit alpha, chloroplastic of Porphyra purpurea (Red seaweed).